The sequence spans 2185 residues: Genome polyprotein (2185 aa).

Residue Gly-2 is the site of N-myristoyl glycine; by host attachment. Over 2–1495 (GAQVSTQKTG…HVSRAFICLQ (1494 aa)) the chain is Cytoplasmic. An amphipathic alpha-helix region spans residues 568–584 (FFQGPVEDAITAAIGRV). Active-site for protease 2A activity residues include His-872 and Asp-890. Zn(2+) is bound by residues Cys-907 and Cys-909. Cys-961 serves as the catalytic For protease 2A activity. The Zn(2+) site is built by Cys-967 and His-969. Positions 1101 to 1173 (NNGWLKKFTE…EQSAPSQSDQ (73 aa)) are membrane-binding. The oligomerization stretch occupies residues 1101-1239 (NNGWLKKFTE…SPGAGKSVAT (139 aa)). Residues 1122 to 1126 (AIKIQ) are RNA-binding. The 157-residue stretch at 1205–1361 (EKKMSNYIQF…SMYSQNGKIN (157 aa)) folds into the SF3 helicase domain. Zn(2+) contacts are provided by Cys-1369, Cys-1381, and Cys-1386. The C4-type; degenerate zinc-finger motif lies at 1369–1386 (CDEECCPVNFKKCCPLVC). Positions 1413–1420 (EYNHRHSV) are RNA-binding. An oligomerization region spans residues 1424–1429 (LEALFQ). The stretch at 1496–1511 (AITTFVSVAGIIYIIY) is an intramembrane region. Residues 1512-2185 (KLFAGFQGAY…TIRRKWLDSF (674 aa)) lie on the Cytoplasmic side of the membrane. Tyr-1521 bears the O-(5'-phospho-RNA)-tyrosine mark. A Peptidase C3 domain is found at 1541 to 1719 (GPAFEFAVAM…FSAALLKHYF (179 aa)). Catalysis depends on for protease 3C activity residues His-1580, Glu-1611, and Cys-1687. A RdRp catalytic domain is found at 1950–2066 (GHLIAFDYSG…SYPWPIDASL (117 aa)). Positions 1956 and 2052 each coordinate Mg(2+).

The protein belongs to the picornaviruses polyprotein family. As to quaternary structure, interacts with capsid protein VP1 and capsid protein VP3 to form heterotrimeric protomers. Interacts with capsid protein VP0, and capsid protein VP3 to form heterotrimeric protomers. Five protomers subsequently associate to form pentamers which serve as building blocks for the capsid. Interacts with capsid protein VP2, capsid protein VP3 and capsid protein VP4 following cleavage of capsid protein VP0. Interacts with host CD55. Interacts with host CXADR. In terms of assembly, interacts with capsid protein VP1 and capsid protein VP3 in the mature capsid. As to quaternary structure, interacts with capsid protein VP0 and capsid protein VP1 to form heterotrimeric protomers. Five protomers subsequently associate to form pentamers which serve as building blocks for the capsid. Interacts with capsid protein VP4 in the mature capsid. Interacts with protein 2C; this interaction may be important for virion morphogenesis. Interacts with capsid protein VP1 and capsid protein VP3. In terms of assembly, homodimer. As to quaternary structure, homohexamer; forms a hexameric ring structure with 6-fold symmetry characteristic of AAA+ ATPases. Interacts (via N-terminus) with host RTN3 (via reticulon domain); this interaction is important for viral replication. Interacts with capsid protein VP3; this interaction may be important for virion morphogenesis. Interacts with protein 3CD. In terms of assembly, homodimer. Interacts with host GBF1. Interacts (via GOLD domain) with host ACBD3 (via GOLD domain); this interaction allows the formation of a viral protein 3A/ACBD3 heterotetramer with a 2:2 stoichiometry, which will stimulate the recruitment of host PI4KB in order to synthesize PI4P at the viral RNA replication sites. As to quaternary structure, interacts with RNA-directed RNA polymerase. Interacts with host TICAM1 (via C-terminus). In terms of assembly, interacts with protein 3AB and with RNA-directed RNA polymerase. As to quaternary structure, interacts with Viral protein genome-linked and with protein 3CD. The cofactor is Mg(2+). Specific enzymatic cleavages in vivo by the viral proteases yield processing intermediates and the mature proteins. Post-translationally, myristoylation is required for the formation of pentamers during virus assembly. Further assembly of 12 pentamers and a molecule of genomic RNA generates the provirion. In terms of processing, during virion maturation, immature virions are rendered infectious following cleavage of VP0 into VP4 and VP2. This maturation seems to be an autocatalytic event triggered by the presence of RNA in the capsid and it is followed by a conformational change infectious virion. Myristoylation is required during RNA encapsidation and formation of the mature virus particle. Post-translationally, VPg is uridylylated by the polymerase into VPg-pUpU. This acts as a nucleotide-peptide primer for the genomic RNA replication.

It localises to the virion. The protein localises to the host cytoplasm. The protein resides in the host cytoplasmic vesicle membrane. It is found in the host nucleus. The catalysed reaction is a ribonucleoside 5'-triphosphate + H2O = a ribonucleoside 5'-diphosphate + phosphate + H(+). It carries out the reaction Selective cleavage of Tyr-|-Gly bond in the picornavirus polyprotein.. It catalyses the reaction RNA(n) + a ribonucleoside 5'-triphosphate = RNA(n+1) + diphosphate. The enzyme catalyses Selective cleavage of Gln-|-Gly bond in the poliovirus polyprotein. In other picornavirus reactions Glu may be substituted for Gln, and Ser or Thr for Gly.. Its activity is regulated as follows. Replication or transcription is subject to high level of random mutations by the nucleotide analog ribavirin. Functionally, forms an icosahedral capsid of pseudo T=3 symmetry with capsid proteins VP2 and VP3. The capsid is 300 Angstroms in diameter, composed of 60 copies of each capsid protein and enclosing the viral positive strand RNA genome. Capsid protein VP1 mainly forms the vertices of the capsid. Capsid protein VP1 interacts with host cell receptors CD55 and CXADR to provide virion attachment to target host cells. This attachment induces virion internalization. Tyrosine kinases are probably involved in the entry process. After binding to its receptor, the capsid undergoes conformational changes. Capsid protein VP1 N-terminus (that contains an amphipathic alpha-helix) and capsid protein VP4 are externalized. Together, they shape a pore in the host membrane through which viral genome is translocated to host cell cytoplasm. In terms of biological role, forms an icosahedral capsid of pseudo T=3 symmetry with capsid proteins VP2 and VP3. The capsid is 300 Angstroms in diameter, composed of 60 copies of each capsid protein and enclosing the viral positive strand RNA genome. Its function is as follows. Lies on the inner surface of the capsid shell. After binding to the host receptor, the capsid undergoes conformational changes. Capsid protein VP4 is released, Capsid protein VP1 N-terminus is externalized, and together, they shape a pore in the host membrane through which the viral genome is translocated into the host cell cytoplasm. Component of immature procapsids, which is cleaved into capsid proteins VP4 and VP2 after maturation. Allows the capsid to remain inactive before the maturation step. Functionally, cysteine protease that cleaves viral polyprotein and specific host proteins. It is responsible for the autocatalytic cleavage between the P1 and P2 regions, which is the first cleavage occurring in the polyprotein. Also cleaves the host translation initiation factor EIF4G1, in order to shut down the capped cellular mRNA translation. Inhibits the host nucleus-cytoplasm protein and RNA trafficking by cleaving host members of the nuclear pores. Counteracts stress granule formation probably by antagonizing its assembly or promoting its dissassembly. Cleaves and inhibits host IFIH1/MDA5, thereby inhibiting the type-I IFN production and the establishment of the antiviral state. Cleaves and inhibits host MAVS, thereby inhibiting the type-I IFN production and the establishment of the antiviral state. In terms of biological role, plays an essential role in the virus replication cycle by acting as a viroporin. Creates a pore in the host endoplasmic reticulum and as a consequence releases Ca2+ in the cytoplasm of infected cell. In turn, high levels of cytoplasmic calcium may trigger membrane trafficking and transport of viral ER-associated proteins to viroplasms, sites of viral genome replication. Its function is as follows. Induces and associates with structural rearrangements of intracellular membranes. Displays RNA-binding, nucleotide binding and NTPase activities. May play a role in virion morphogenesis and viral RNA encapsidation by interacting with the capsid protein VP3. Localizes the viral replication complex to the surface of membranous vesicles. Together with protein 3CD binds the Cis-Active RNA Element (CRE) which is involved in RNA synthesis initiation. Acts as a cofactor to stimulate the activity of 3D polymerase, maybe through a nucleid acid chaperone activity. Functionally, localizes the viral replication complex to the surface of membranous vesicles. It inhibits host cell endoplasmic reticulum-to-Golgi apparatus transport and causes the disassembly of the Golgi complex, possibly through GBF1 interaction. This would result in depletion of MHC, trail receptors and IFN receptors at the host cell surface. Plays an essential role in viral RNA replication by recruiting ACBD3 and PI4KB at the viral replication sites, thereby allowing the formation of the rearranged membranous structures where viral replication takes place. In terms of biological role, acts as a primer for viral RNA replication and remains covalently bound to viral genomic RNA. VPg is uridylylated prior to priming replication into VPg-pUpU. The oriI viral genomic sequence may act as a template for this. The VPg-pUpU is then used as primer on the genomic RNA poly(A) by the RNA-dependent RNA polymerase to replicate the viral genome. During genome replication, the VPg-RNA linkage is removed by the host TDP2, thereby accelerating replication. During the late stage of the replication cycle, host TDP2 is excluded from sites of viral RNA synthesis and encapsidation, allowing for the generation of progeny virions. Its function is as follows. Involved in the viral replication complex and viral polypeptide maturation. It exhibits protease activity with a specificity and catalytic efficiency that is different from protease 3C. Protein 3CD lacks polymerase activity. Protein 3CD binds to the 5'UTR of the viral genome. Major viral protease that mediates proteolytic processing of the polyprotein. Cleaves host EIF5B, contributing to host translation shutoff. Also cleaves host PABPC1, contributing to host translation shutoff. Cleaves and inhibits host RIGI, thereby inhibiting the type-I IFN production and the establishment of the antiviral state. Cleaves and inhibits host MAVS, thereby inhibiting the type-I IFN production and the establishment of the antiviral state. Cleaves and inhibits host TICAM1/TRIF, thereby inhibiting the type-I IFN production. Cleaves host NLRP1, triggers host N-glycine-mediated degradation of the autoinhibitory NLRP1 N-terminal fragment. Functionally, replicates the viral genomic RNA on the surface of intracellular membranes. May form linear arrays of subunits that propagate along a strong head-to-tail interaction called interface-I. Covalently attaches UMP to a tyrosine of VPg, which is used to prime RNA synthesis. The positive stranded RNA genome is first replicated at virus induced membranous vesicles, creating a dsRNA genomic replication form. This dsRNA is then used as template to synthesize positive stranded RNA genomes. ss(+)RNA genomes are either translated, replicated or encapsidated. This Homo sapiens (Human) protein is Genome polyprotein.